Reading from the N-terminus, the 417-residue chain is Serine hydroxymethyltransferase (417 aa).

(6S)-5,6,7,8-tetrahydrofolate contacts are provided by residues L121 and 125 to 127; that span reads GHL. K229 bears the N6-(pyridoxal phosphate)lysine mark. 355-357 is a binding site for (6S)-5,6,7,8-tetrahydrofolate; it reads SPF.

Belongs to the SHMT family. Homodimer. Pyridoxal 5'-phosphate serves as cofactor.

It localises to the cytoplasm. It catalyses the reaction (6R)-5,10-methylene-5,6,7,8-tetrahydrofolate + glycine + H2O = (6S)-5,6,7,8-tetrahydrofolate + L-serine. It participates in one-carbon metabolism; tetrahydrofolate interconversion. It functions in the pathway amino-acid biosynthesis; glycine biosynthesis; glycine from L-serine: step 1/1. In terms of biological role, catalyzes the reversible interconversion of serine and glycine with tetrahydrofolate (THF) serving as the one-carbon carrier. This reaction serves as the major source of one-carbon groups required for the biosynthesis of purines, thymidylate, methionine, and other important biomolecules. Also exhibits THF-independent aldolase activity toward beta-hydroxyamino acids, producing glycine and aldehydes, via a retro-aldol mechanism. The chain is Serine hydroxymethyltransferase from Shewanella oneidensis (strain ATCC 700550 / JCM 31522 / CIP 106686 / LMG 19005 / NCIMB 14063 / MR-1).